A 318-amino-acid polypeptide reads, in one-letter code: Pyrimidine-specific ribonucleoside hydrolase RihA (318 aa).

Histidine 240 is an active-site residue.

This sequence belongs to the IUNH family. RihA subfamily.

In terms of biological role, hydrolyzes cytidine or uridine to ribose and cytosine or uracil, respectively. This is Pyrimidine-specific ribonucleoside hydrolase RihA from Shewanella sp. (strain ANA-3).